Consider the following 265-residue polypeptide: NAD kinase 2 (265 aa).

Asn-51 acts as the Proton acceptor in catalysis. Residues 122–123, Arg-149, Asp-151, 162–167, Ala-186, and Asn-226 contribute to the NAD(+) site; these read NE and TAYNKS.

It belongs to the NAD kinase family. A divalent metal cation is required as a cofactor.

The protein localises to the cytoplasm. It carries out the reaction NAD(+) + ATP = ADP + NADP(+) + H(+). Involved in the regulation of the intracellular balance of NAD and NADP, and is a key enzyme in the biosynthesis of NADP. Catalyzes specifically the phosphorylation on 2'-hydroxyl of the adenosine moiety of NAD to yield NADP. The sequence is that of NAD kinase 2 from Halalkalibacterium halodurans (strain ATCC BAA-125 / DSM 18197 / FERM 7344 / JCM 9153 / C-125) (Bacillus halodurans).